Reading from the N-terminus, the 314-residue chain is Methionyl-tRNA formyltransferase (314 aa).

110-113 (SLLP) provides a ligand contact to (6S)-5,6,7,8-tetrahydrofolate.

This sequence belongs to the Fmt family.

The enzyme catalyses L-methionyl-tRNA(fMet) + (6R)-10-formyltetrahydrofolate = N-formyl-L-methionyl-tRNA(fMet) + (6S)-5,6,7,8-tetrahydrofolate + H(+). Functionally, attaches a formyl group to the free amino group of methionyl-tRNA(fMet). The formyl group appears to play a dual role in the initiator identity of N-formylmethionyl-tRNA by promoting its recognition by IF2 and preventing the misappropriation of this tRNA by the elongation apparatus. The chain is Methionyl-tRNA formyltransferase from Bacillus anthracis (strain A0248).